A 430-amino-acid polypeptide reads, in one-letter code: Citrate synthase (430 aa).

Catalysis depends on residues His305 and Asp363.

Belongs to the citrate synthase family. In terms of assembly, homohexamer.

It carries out the reaction oxaloacetate + acetyl-CoA + H2O = citrate + CoA + H(+). Its pathway is carbohydrate metabolism; tricarboxylic acid cycle; isocitrate from oxaloacetate: step 1/2. With respect to regulation, allosterically inhibited by NADH. The chain is Citrate synthase (gltA) from Coxiella burnetii (strain RSA 493 / Nine Mile phase I).